We begin with the raw amino-acid sequence, 283 residues long: ATP synthase gamma chain (283 aa).

It belongs to the ATPase gamma chain family. In terms of assembly, F-type ATPases have 2 components, CF(1) - the catalytic core - and CF(0) - the membrane proton channel. CF(1) has five subunits: alpha(3), beta(3), gamma(1), delta(1), epsilon(1). CF(0) has three main subunits: a, b and c.

It is found in the cell membrane. Produces ATP from ADP in the presence of a proton gradient across the membrane. The gamma chain is believed to be important in regulating ATPase activity and the flow of protons through the CF(0) complex. The protein is ATP synthase gamma chain of Clostridium kluyveri (strain NBRC 12016).